Here is a 252-residue protein sequence, read N- to C-terminus: Imidazole glycerol phosphate synthase subunit HisF (252 aa).

Catalysis depends on residues D11 and D130.

It belongs to the HisA/HisF family. Heterodimer of HisH and HisF.

Its subcellular location is the cytoplasm. It carries out the reaction 5-[(5-phospho-1-deoxy-D-ribulos-1-ylimino)methylamino]-1-(5-phospho-beta-D-ribosyl)imidazole-4-carboxamide + L-glutamine = D-erythro-1-(imidazol-4-yl)glycerol 3-phosphate + 5-amino-1-(5-phospho-beta-D-ribosyl)imidazole-4-carboxamide + L-glutamate + H(+). It functions in the pathway amino-acid biosynthesis; L-histidine biosynthesis; L-histidine from 5-phospho-alpha-D-ribose 1-diphosphate: step 5/9. In terms of biological role, IGPS catalyzes the conversion of PRFAR and glutamine to IGP, AICAR and glutamate. The HisF subunit catalyzes the cyclization activity that produces IGP and AICAR from PRFAR using the ammonia provided by the HisH subunit. The sequence is that of Imidazole glycerol phosphate synthase subunit HisF from Lactiplantibacillus plantarum (strain ATCC BAA-793 / NCIMB 8826 / WCFS1) (Lactobacillus plantarum).